A 64-amino-acid chain; its full sequence is Large ribosomal subunit protein bL35 (64 aa).

This sequence belongs to the bacterial ribosomal protein bL35 family.

This chain is Large ribosomal subunit protein bL35, found in Leifsonia xyli subsp. xyli (strain CTCB07).